A 323-amino-acid chain; its full sequence is Beta-ketoacyl-[acyl-carrier-protein] synthase III (323 aa).

Residues cysteine 113 and histidine 250 contribute to the active site. The segment at 251 to 255 is ACP-binding; that stretch reads QANLR. Residue asparagine 280 is part of the active site.

Belongs to the thiolase-like superfamily. FabH family. Homodimer.

It localises to the cytoplasm. It carries out the reaction malonyl-[ACP] + acetyl-CoA + H(+) = 3-oxobutanoyl-[ACP] + CO2 + CoA. It functions in the pathway lipid metabolism; fatty acid biosynthesis. Functionally, catalyzes the condensation reaction of fatty acid synthesis by the addition to an acyl acceptor of two carbons from malonyl-ACP. Catalyzes the first condensation reaction which initiates fatty acid synthesis and may therefore play a role in governing the total rate of fatty acid production. Possesses both acetoacetyl-ACP synthase and acetyl transacylase activities. Its substrate specificity determines the biosynthesis of branched-chain and/or straight-chain of fatty acids. This is Beta-ketoacyl-[acyl-carrier-protein] synthase III from Paracoccus denitrificans (strain Pd 1222).